The primary structure comprises 458 residues: Ammonium transporter Rh type B (458 aa).

At 1–11 (MTDAATNMRLK) the chain is on the cytoplasmic side. A helical membrane pass occupies residues 12–32 (LPITCFILEIILIILFGTLVQ). Residues 33–58 (YDYETDAKEWHNTSHQDYENDFYFRY) lie on the Extracellular side of the membrane. N-linked (GlcNAc...) asparagine glycosylation is present at Asn-44. A helical transmembrane segment spans residues 59–79 (PSFQDVHVMIFVGFGFLMTFL). Residues 80–83 (QRYG) are Cytoplasmic-facing. Residues 84–104 (FGSVGFNFLIAAFSLQWATLM) form a helical membrane-spanning segment. Residues 105–121 (QGFFHGMHGGKIHIGVE) are Extracellular-facing. A helical transmembrane segment spans residues 122-142 (SMINADFCTGSVLISFGAVLG). Over 143 to 151 (KTSPIQLLT) the chain is Cytoplasmic. The chain crosses the membrane as a helical span at residues 152 to 172 (MAIFEVTLFAVNEFILLSLLG). Residues 173 to 176 (TKDA) are Extracellular-facing. The chain crosses the membrane as a helical span at residues 177–197 (GGSMTIHTFGAYFGLMVTRIL). Over 198 to 216 (YRPNLDKSKHRNSSVYHSD) the chain is Cytoplasmic. The chain crosses the membrane as a helical span at residues 217–237 (LFAMIGTVYLWMFWPSFNSAI). The Extracellular portion of the chain corresponds to 238-247 (TAHGDDQHRT). A helical transmembrane segment spans residues 248–270 (ALNTYYSLAACTLATYGMSAITS). The Cytoplasmic segment spans residues 271-274 (HDGK). A helical membrane pass occupies residues 275–295 (LDMVHIQNAALAGGVAVGTAG). The Extracellular portion of the chain corresponds to 296-298 (EMM). The chain crosses the membrane as a helical span at residues 299-319 (LTPFGSMIVGFMAGIISVLGF). Over 320–340 (KFLSPILEDKLKIQDTCGIHN) the chain is Cytoplasmic. The chain crosses the membrane as a helical span at residues 341 to 361 (LHGMPGVLGAIVGAVTAALAT). The Extracellular segment spans residues 362–391 (TDVYGQGMADVFPAVADGSVNATKQGGIQA). The chain crosses the membrane as a helical span at residues 392–412 (LSLAITLGIAVLGGLIVGFVL). The Cytoplasmic segment spans residues 413-458 (KLPVFGTPPDTLCFEDSVYWEVPGSESPEEGELTSVKPEETEHLNS). A disordered region spans residues 436 to 458 (GSESPEEGELTSVKPEETEHLNS). A compositionally biased stretch (basic and acidic residues) spans 449-458 (KPEETEHLNS).

This sequence belongs to the ammonium transporter (TC 2.A.49) family. Rh subfamily. In terms of tissue distribution, specifically expressed in the gill by pavement cells (at protein level).

It is found in the apicolateral cell membrane. It localises to the cytoplasmic vesicle membrane. Functionally, functions as an ammonia transporter. May play a role in the elimination of ammonia in the gill. This Takifugu rubripes (Japanese pufferfish) protein is Ammonium transporter Rh type B (rhbg).